A 546-amino-acid polypeptide reads, in one-letter code: Chaperonin GroEL 2 (546 aa).

ATP-binding positions include 30–33, lysine 51, 87–91, glycine 415, 479–481, and aspartate 495; these read TLGP, DGTTT, and NAA. The tract at residues 524–546 is disordered; sequence APKDAPPAAPAGVPGAGGPGFDF. Positions 537 to 546 are enriched in gly residues; that stretch reads PGAGGPGFDF.

It belongs to the chaperonin (HSP60) family. Forms a cylinder of 14 subunits composed of two heptameric rings stacked back-to-back. Interacts with the co-chaperonin GroES.

It is found in the cytoplasm. It carries out the reaction ATP + H2O + a folded polypeptide = ADP + phosphate + an unfolded polypeptide.. Its function is as follows. Together with its co-chaperonin GroES, plays an essential role in assisting protein folding. The GroEL-GroES system forms a nano-cage that allows encapsulation of the non-native substrate proteins and provides a physical environment optimized to promote and accelerate protein folding. This chain is Chaperonin GroEL 2, found in Burkholderia pseudomallei (strain 1710b).